A 214-amino-acid polypeptide reads, in one-letter code: Large ribosomal subunit protein uL3 (214 aa).

The span at 132-145 (SNRASHGNSVTTRA) shows a compositional bias: polar residues. The tract at residues 132–155 (SNRASHGNSVTTRAPGSIGQAQDP) is disordered. Position 153 is an N5-methylglutamine (Gln153).

This sequence belongs to the universal ribosomal protein uL3 family. Part of the 50S ribosomal subunit. Forms a cluster with proteins L14 and L19. In terms of processing, methylated by PrmB.

One of the primary rRNA binding proteins, it binds directly near the 3'-end of the 23S rRNA, where it nucleates assembly of the 50S subunit. This chain is Large ribosomal subunit protein uL3, found in Laribacter hongkongensis (strain HLHK9).